Here is a 336-residue protein sequence, read N- to C-terminus: Atypical chemokine receptor 1 (336 aa).

Over 1–63 the chain is Extracellular; that stretch reads MGNCLHQAEL…CNLLDDSSLP (63 aa). Residues Asn16 and Asn33 are each glycosylated (N-linked (GlcNAc...) asparagine). Disulfide bonds link Cys51-Cys276 and Cys129-Cys195. Residues 64–84 traverse the membrane as a helical segment; the sequence is FFILASVLGILASSTVLFMLF. At 85–95 the chain is on the cytoplasmic side; sequence RPLFRWQLCPG. The helical transmembrane segment at 96-116 threads the bilayer; sequence WPVLAQLAVGSALFSIVVPIL. Over 117–129 the chain is Extracellular; sequence APGLGNTRSSALC. Residues 130–153 traverse the membrane as a helical segment; it reads SLGYCVWYGSAFAQALLLGCHASL. The Cytoplasmic portion of the chain corresponds to 154 to 166; it reads GPKLGAGQVPGLT. A helical transmembrane segment spans residues 167–187; sequence LGLTVGLWGAAALLTVPITLA. The Extracellular segment spans residues 188–207; sequence SGASDGLCTPIYSTELKALQ. The helical transmembrane segment at 208–228 threads the bilayer; the sequence is ATHTVACFAIFVLLPLGLFGA. Residues 229-244 lie on the Cytoplasmic side of the membrane; that stretch reads KGVKKALGMGPGPWMT. Residues 245–265 form a helical membrane-spanning segment; the sequence is ILWIWFIFWWPHGVVLGLDFL. Residues 266–287 are Extracellular-facing; sequence VRSKLLLLPTCLAQQVLDLLLN. The chain crosses the membrane as a helical span at residues 288 to 308; that stretch reads LAEALTIVHCVATPLLLALFC. Residues 309–336 are Cytoplasmic-facing; the sequence is HQATRTLLPSLPLPERWSSPVDTLGSKS.

The protein belongs to the G-protein coupled receptor 1 family. Atypical chemokine receptor subfamily.

It is found in the early endosome. The protein localises to the recycling endosome. It localises to the membrane. Its function is as follows. Atypical chemokine receptor that controls chemokine levels and localization via high-affinity chemokine binding that is uncoupled from classic ligand-driven signal transduction cascades, resulting instead in chemokine sequestration, degradation, or transcytosis. Also known as interceptor (internalizing receptor) or chemokine-scavenging receptor or chemokine decoy receptor. Has a promiscuous chemokine-binding profile, interacting with inflammatory chemokines of both the CXC and the CC subfamilies but not with homeostatic chemokines. Acts as a receptor for chemokines including CCL2, CCL5, CCL7, CCL11, CCL13, CCL14, CCL17, CXCL5, CXCL6, IL8/CXCL8, CXCL11, GRO, RANTES, MCP-1 and TARC. May regulate chemokine bioavailability and, consequently, leukocyte recruitment through two distinct mechanisms: when expressed in endothelial cells, it sustains the abluminal to luminal transcytosis of tissue-derived chemokines and their subsequent presentation to circulating leukocytes; when expressed in erythrocytes, serves as blood reservoir of cognate chemokines but also as a chemokine sink, buffering potential surges in plasma chemokine levels. This chain is Atypical chemokine receptor 1 (ACKR1), found in Sapajus apella (Brown-capped capuchin).